The following is a 160-amino-acid chain: NADH-quinone oxidoreductase subunit B (160 aa).

[4Fe-4S] cluster-binding residues include Cys-37, Cys-38, Cys-102, and Cys-132.

It belongs to the complex I 20 kDa subunit family. As to quaternary structure, NDH-1 is composed of 14 different subunits. Subunits NuoB, C, D, E, F, and G constitute the peripheral sector of the complex. [4Fe-4S] cluster serves as cofactor.

It localises to the cell inner membrane. The catalysed reaction is a quinone + NADH + 5 H(+)(in) = a quinol + NAD(+) + 4 H(+)(out). NDH-1 shuttles electrons from NADH, via FMN and iron-sulfur (Fe-S) centers, to quinones in the respiratory chain. Couples the redox reaction to proton translocation (for every two electrons transferred, four hydrogen ions are translocated across the cytoplasmic membrane), and thus conserves the redox energy in a proton gradient. This Cupriavidus metallidurans (strain ATCC 43123 / DSM 2839 / NBRC 102507 / CH34) (Ralstonia metallidurans) protein is NADH-quinone oxidoreductase subunit B.